A 176-amino-acid polypeptide reads, in one-letter code: Endoribonuclease YbeY (176 aa).

The Zn(2+) site is built by His-139, His-143, and His-149.

It belongs to the endoribonuclease YbeY family. Zn(2+) is required as a cofactor.

It localises to the cytoplasm. In terms of biological role, single strand-specific metallo-endoribonuclease involved in late-stage 70S ribosome quality control and in maturation of the 3' terminus of the 16S rRNA. This chain is Endoribonuclease YbeY, found in Acaryochloris marina (strain MBIC 11017).